We begin with the raw amino-acid sequence, 308 residues long: Phenylcoumaran benzylic ether reductase Betv6 (308 aa).

Residues 11-17, Arg-36, and Lys-45 each bind NADP(+); that span reads GGTGYIG. Lys-133 functions as the Proton acceptor in the catalytic mechanism. NADP(+) is bound at residue Arg-137.

The protein belongs to the NmrA-type oxidoreductase family. Isoflavone reductase subfamily.

It catalyses the reaction (-)-dehydrodiconiferyl alcohol + NADPH + H(+) = (S)-isodihydrodehydrodiconiferyl alcohol + NADP(+). It carries out the reaction (+)-dehydrodiconiferyl alcohol + NADPH + H(+) = (R)-isodihydrodehydrodiconiferyl alcohol + NADP(+). Functionally, oxidoreductase involved in lignan biosynthesis. Catalyzes the NADPH-dependent reduction of phenylcoumaran benzylic ethers. Converts dehydrodiconiferyl alcohol (DDC) to isodihydrodehydrodiconiferyl alcohol (IDDDC). The chain is Phenylcoumaran benzylic ether reductase Betv6 from Betula pendula (European white birch).